The sequence spans 786 residues: AT-rich interactive domain-containing protein 3 (786 aa).

A compositionally biased stretch (low complexity) spans M1–E16. Disordered stretches follow at residues M1–D182, S199–N251, and D395–A420. Composition is skewed to basic and acidic residues over residues E18–S64 and D87–S97. Residues E130–S139 are compositionally biased toward low complexity. Composition is skewed to basic and acidic residues over residues I141–A156, K169–D182, S199–S219, A234–I248, and N402–D416. An ARID domain is found at E494–V585. The interval Q606–D638 is disordered. Residues V686–E786 enclose the sHSP domain.

This sequence belongs to the small heat shock protein (HSP20) family.

It is found in the nucleus. This is AT-rich interactive domain-containing protein 3 (ARID3) from Arabidopsis thaliana (Mouse-ear cress).